A 95-amino-acid chain; its full sequence is 1,2-phenylacetyl-CoA epoxidase, subunit B (95 aa).

In terms of assembly, homotrimer. Forms a stable heterodimer with PaaC. Probably forms an oligomer with PaaAC.

It functions in the pathway aromatic compound metabolism; phenylacetate degradation. Its function is as follows. Component of 1,2-phenylacetyl-CoA epoxidase multicomponent enzyme system which catalyzes the reduction of phenylacetyl-CoA (PA-CoA) to form 1,2-epoxyphenylacetyl-CoA. The subunit B may play a regulatory role or be directly involved in electron transport. In Escherichia coli (strain K12), this protein is 1,2-phenylacetyl-CoA epoxidase, subunit B (paaB).